A 1165-amino-acid chain; its full sequence is Vacuolar segregation protein 7 (1165 aa).

Over 1–919 (MTEEDRKLTV…RKSPFVKVKN (919 aa)) the chain is Cytoplasmic. The disordered stretch occupies residues 118–147 (SVSSTNNNSNNALINHNPLSSHLSNPSSSL). Serine 164 carries the post-translational modification Phosphoserine. Disordered regions lie at residues 215-241 (SNNT…LPSL), 274-423 (KAKN…SEKP), 461-497 (LIFP…SAPL), and 560-668 (EPPH…KRPL). Positions 216–230 (NNTAPSTSNNIGSNT) are enriched in polar residues. The segment covering 334-345 (TTSTKTAPSTAP) has biased composition (low complexity). The segment covering 346-367 (LGSTDNTQALTASVSSSNADNH) has biased composition (polar residues). Residues 375 to 391 (SSNNNGNNSNSASNKTN) are compositionally biased toward low complexity. Residues 393–412 (DIKNSNADLSASTSNNNAIN) show a composition bias toward polar residues. Residues 413-423 (DDSHESNSEKP) show a composition bias toward basic and acidic residues. Composition is skewed to low complexity over residues 469–485 (QQQQ…QQQQ) and 562–571 (PHQLQQQQPP). Polar residues predominate over residues 576–587 (SVDSYTSDNPDS). The segment covering 599–613 (SLVSLSKVSPHLLSS) has biased composition (low complexity). Over residues 614–662 (TSSNGNTISCPNVATNSQELEPNNDISTKKSLSNSTLRHSSANRNSNYG) the composition is skewed to polar residues. The chain crosses the membrane as a helical; Signal-anchor for type II membrane protein span at residues 920 to 940 (FLYLAFVISSLLMTGFILGFL). The Vacuolar segment spans residues 941–1165 (LATNKELQDV…KDSMVHPGKK (225 aa)). N-linked (GlcNAc...) asparagine glycosylation is found at asparagine 1020 and asparagine 1099. The disordered stretch occupies residues 1074-1121 (SPGSREAKHENDDDDDDDGDDGDDENNTNERQYKSKPNARDDKEDDTK). Residues 1085–1100 (DDDDDDDGDDGDDENN) show a composition bias toward acidic residues. Residues 1111–1121 (NARDDKEDDTK) are compositionally biased toward basic and acidic residues.

As to quaternary structure, component of the PI(3,5)P2 regulatory complex, composed of ATG18, FIG4, FAB1, VAC14 and VAC7. VAC14 nucleates the assembly of the complex and serves as a scaffold. In terms of processing, N-glycosylated.

It localises to the vacuole membrane. Functionally, the PI(3,5)P2 regulatory complex regulates both the synthesis and turnover of phosphatidylinositol 3,5-bisphosphate (PtdIns(3,5)P2). Positively regulates FAB1 kinase activity. Major activator of FAB1 during hyperosmotic shock and can elevate levels of PtdIns(3,5)P2 in the absence of VAC14 and FIG4. Directly involved in vacuolar membrane scission. Required for normal vacuole acidification, inheritance and morphology. This Saccharomyces cerevisiae (strain ATCC 204508 / S288c) (Baker's yeast) protein is Vacuolar segregation protein 7 (VAC7).